Reading from the N-terminus, the 106-residue chain is SDO1-like protein C21C3.19 (106 aa).

It belongs to the SDO1-like family.

The protein localises to the cytoplasm. Its subcellular location is the nucleus. In terms of biological role, may play a role in RNA metabolism. The protein is SDO1-like protein C21C3.19 of Schizosaccharomyces pombe (strain 972 / ATCC 24843) (Fission yeast).